The chain runs to 141 residues: MVHFQLPVAAPLCLLCALLLLPSATMIPGGLSPRSVSDPDVQKAAAFAVQEYNARSANAHYYKELRVVEAQSQVVAGEKYYLMMELVKTKCAKTAGKPKVYKEIQNCELPPKAQQEKLTCHFQVWSRPWLDKTELTKMSCN.

An N-terminal signal peptide occupies residues 1 to 26 (MVHFQLPVAAPLCLLCALLLLPSATM). In terms of domain architecture, Cystatin spans 29–129 (GGLSPRSVSD…CHFQVWSRPW (101 aa)). A Secondary area of contact motif is present at residues 73-77 (QVVAG). Cystine bridges form between Cys91/Cys107 and Cys120/Cys140.

Belongs to the cystatin family. In terms of tissue distribution, expressed at a low level by the venom gland (at protein level).

Its subcellular location is the secreted. Inhibits various C1 cysteine proteases including cathepsin L, papain and cathepsin B. This protein has no toxic activity and its function in the venom is unknown. It may play a role as a housekeeping or regulatory protein. The chain is Cystatin from Naja kaouthia (Monocled cobra).